A 332-amino-acid polypeptide reads, in one-letter code: Glycerol-3-phosphate dehydrogenase [NAD(P)+] (332 aa).

NADPH contacts are provided by S11, W12, R32, R33, and K106. The sn-glycerol 3-phosphate site is built by K106 and G136. Residue A140 participates in NADPH binding. Sn-glycerol 3-phosphate contacts are provided by K191, D244, S254, R255, and N256. Catalysis depends on K191, which acts as the Proton acceptor. An NADPH-binding site is contributed by R255. Residues V280 and E282 each coordinate NADPH.

The protein belongs to the NAD-dependent glycerol-3-phosphate dehydrogenase family.

Its subcellular location is the cytoplasm. It catalyses the reaction sn-glycerol 3-phosphate + NAD(+) = dihydroxyacetone phosphate + NADH + H(+). The catalysed reaction is sn-glycerol 3-phosphate + NADP(+) = dihydroxyacetone phosphate + NADPH + H(+). The protein operates within membrane lipid metabolism; glycerophospholipid metabolism. Its function is as follows. Catalyzes the reduction of the glycolytic intermediate dihydroxyacetone phosphate (DHAP) to sn-glycerol 3-phosphate (G3P), the key precursor for phospholipid synthesis. This chain is Glycerol-3-phosphate dehydrogenase [NAD(P)+], found in Corynebacterium jeikeium (strain K411).